A 229-amino-acid chain; its full sequence is MNAAVPMLAIDGPSGAGKGTVAGLLARRLGWNLLDSGALYRLLAFAAVNHGVDLTNEEALKLLAAHLDVQFVAADDSHGQRIILEGEEVTDVIRTEQVGAGASQVAALPAVRDALLQRQRAFREAPGLVADGRDMGTVVFPDAPLKIFLTASAEERARRRYLQLKAKGADVDQSALLEEIRERDERDSQRAVAPLKPADDAILLDSTEMSIEAVVETIIHHCEQQGWDV.

12–20 (GPSGAGKGT) is an ATP binding site.

The protein belongs to the cytidylate kinase family. Type 1 subfamily.

The protein resides in the cytoplasm. The catalysed reaction is CMP + ATP = CDP + ADP. The enzyme catalyses dCMP + ATP = dCDP + ADP. The sequence is that of Cytidylate kinase from Pseudomonas paraeruginosa (strain DSM 24068 / PA7) (Pseudomonas aeruginosa (strain PA7)).